Reading from the N-terminus, the 705-residue chain is Elongation factor G (705 aa).

Positions 8 to 290 (HRYRNIGIMA…GVIHLLPSPA (283 aa)) constitute a tr-type G domain. GTP contacts are provided by residues 17 to 24 (AHIDAGKT), 88 to 92 (DTPGH), and 142 to 145 (NKMD).

It belongs to the TRAFAC class translation factor GTPase superfamily. Classic translation factor GTPase family. EF-G/EF-2 subfamily.

The protein localises to the cytoplasm. Catalyzes the GTP-dependent ribosomal translocation step during translation elongation. During this step, the ribosome changes from the pre-translocational (PRE) to the post-translocational (POST) state as the newly formed A-site-bound peptidyl-tRNA and P-site-bound deacylated tRNA move to the P and E sites, respectively. Catalyzes the coordinated movement of the two tRNA molecules, the mRNA and conformational changes in the ribosome. This is Elongation factor G from Xylella fastidiosa (strain 9a5c).